A 262-amino-acid polypeptide reads, in one-letter code: Ribosome-recycling factor, mitochondrial (262 aa).

The N-terminal 55 residues, 1-55, are a transit peptide targeting the mitochondrion; sequence MALGIRCFRLLHPAFSSYLADLSRPVSEVPMKTVRGRQRDHIQYSAHPAVPVRQF.

Belongs to the RRF family.

It is found in the mitochondrion. Responsible for the disassembly of ribosomes from messenger RNA at the termination of mitochondrial protein biosynthesis. Acts in collaboration with GFM2. Promotes mitochondrial ribosome recycling by dissolution of intersubunit contacts. The chain is Ribosome-recycling factor, mitochondrial (Mrrf) from Rattus norvegicus (Rat).